The sequence spans 215 residues: Eukaryotic translation initiation factor 4E-1 (215 aa).

Residues 1-32 are disordered; the sequence is MAEDTETRPASAGAEEREEGEIADDGDGSSAA. The span at 16–27 shows a compositional bias: acidic residues; it reads EREEGEIADDGD. EIF4G-binding stretches follow at residues 40–43 and 50–86; these read HPLE and FDNP…NNIH. Residues 58–63, Lys-90, and 108–109 contribute to the mRNA site; these read RQVAWG and WE. A disulfide bond links Cys-113 and Cys-151. The tract at residues 134–143 is EIF4G-binding; it reads HTLLAMIGEQ. MRNA is bound by residues 158–163 and 203–207; these read RQKQER and KRSDK.

Belongs to the eukaryotic initiation factor 4E family. As to quaternary structure, EIF4F is a multi-subunit complex, the composition of which varies with external and internal environmental conditions. It is composed of at least EIF4A, EIF4E and EIF4G. EIF4E is also known to interact with other partners. In higher plants two isoforms of EIF4F have been identified, named isoform EIF4F and isoform EIF(iso)4F. Isoform EIF4F has subunits p220 and p26, whereas isoform EIF(iso)4F has subunits p82 and p28. According to the redox status, the Cys-113-Cys-151 disulfide bridge may have a role in regulating protein function by affecting its ability to bind capped mRNA.

The protein localises to the nucleus. It is found in the cytoplasm. Its function is as follows. Component of the protein complex eIF4F, which is involved in the recognition of the mRNA cap, ATP-dependent unwinding of 5'-terminal secondary structure and recruitment of mRNA to the ribosome. Recognizes and binds the 7-methylguanosine-containing mRNA cap during an early step in the initiation of protein synthesis and facilitates ribosome binding by inducing the unwinding of the mRNAs secondary structures. The sequence is that of Eukaryotic translation initiation factor 4E-1 from Triticum aestivum (Wheat).